The sequence spans 95 residues: UPF0512 protein H (95 aa).

It belongs to the UPF0512 family.

In Dictyostelium discoideum (Social amoeba), this protein is UPF0512 protein H.